Here is a 340-residue protein sequence, read N- to C-terminus: Lysophospholipase L2 (340 aa).

The protein localises to the cell inner membrane. The catalysed reaction is a 1-acyl-sn-glycero-3-phosphocholine + H2O = sn-glycerol 3-phosphocholine + a fatty acid + H(+). This is Lysophospholipase L2 (pldB) from Escherichia coli O6:H1 (strain CFT073 / ATCC 700928 / UPEC).